The sequence spans 157 residues: Probable Brix domain-containing ribosomal biogenesis protein (157 aa).

Residues 1–157 (MLVTTSRKPS…KFNIKGFKKY (157 aa)) form the Brix domain.

Functionally, probably involved in the biogenesis of the ribosome. This is Probable Brix domain-containing ribosomal biogenesis protein from Methanosarcina mazei (strain ATCC BAA-159 / DSM 3647 / Goe1 / Go1 / JCM 11833 / OCM 88) (Methanosarcina frisia).